Reading from the N-terminus, the 52-residue chain is Ovomucoid (52 aa).

One can recognise a Kazal-like domain in the interval 2–52 (VDCSEYPKPACPKDYRPVCGSDNKTYGNKCNFCNAVVESNGTLTLNRFGKC). Intrachain disulfides connect cysteine 4-cysteine 34, cysteine 12-cysteine 31, and cysteine 20-cysteine 52. Residue asparagine 41 is glycosylated (N-linked (GlcNAc...) asparagine).

It localises to the secreted. This is Ovomucoid from Coturnix delegorguei (Harlequin quail).